Here is a 561-residue protein sequence, read N- to C-terminus: MKIKQENITNTTSINTSNVNDKPKPKRKKTSRACNHCHKAHMTCDSGRPCKRCIQRGLDSTCEDAPRKRKKYLQDVPNSSLMSNHSMNSSDNLDSNGVSPMQPTLSQPMPPVQESSLPTNIPNQSQVPSQSPNTASQKQLSYSPPLASTYSPNHKTYSATLFQHSATSPELMQTVPEYFPELYNQHYQPSANPNQKRRTNFLSTAADLEYSTLSNILQENFGHHTTSNEGTPNSHNFSPALSPHNMPTNNTNAPSTSTQLLTNDQQRQATSFNNHTKHNTPSPLNTSHTKLYEDARYPKCDETINQYFLGDTDSGKMVVFPDVLTAIENMKNNDPAVYLERNSKSALSFVMSIQHENNSNGGKEDQLFKEPEEIYEKVKKPFSYTPGYHSLIAYLRKRFTKPMLVKMAESMATYRPSFIACTNSLKEHDLIFMEQCFQRTLLTYDNYIKISGTPTIVWRRTGEVAYVGNEFCVLTGWPKEELIGKDKRKFIVELLDDKSVLQYFQVFSRIAFGDFLGATMTECTLLTPNPNVKIRTGCMWTLKRDVFGIPMMIVGNFLPIL.

Disordered stretches follow at residues 1-32 (MKIK…KTSR), 61-151 (TCED…STYS), and 222-258 (GHHT…STST). A compositionally biased stretch (low complexity) spans 7–18 (NITNTTSINTSN). Positions 34–62 (CNHCHKAHMTCDSGRPCKRCIQRGLDSTC) form a DNA-binding region, zn(2)-C6 fungal-type. Low complexity predominate over residues 78-96 (NSSLMSNHSMNSSDNLDSN). Composition is skewed to polar residues over residues 97 to 151 (GVSP…STYS) and 222 to 239 (GHHT…NFSP). Residues 245 to 258 (NMPTNNTNAPSTST) show a composition bias toward low complexity. The 75-residue stretch at 440–514 (TLLTYDNYIK…QVFSRIAFGD (75 aa)) folds into the PAS domain.

Belongs to the ERT1/acuK family.

Its subcellular location is the nucleus. Functionally, transcription factor which regulates nonfermentable carbon utilization. Activator of gluconeogenetic genes. The chain is Transcription activator of gluconeogenesis ERT1 (ERT1) from Candida albicans (strain WO-1) (Yeast).